A 224-amino-acid chain; its full sequence is TBP-related factor (224 aa).

A disordered region spans residues 14–34; that stretch reads RDNVAATSNAAANPHAALQPQ. Low complexity predominate over residues 17–34; it reads VAATSNAAANPHAALQPQ. 2 repeat units span residues 51 to 127 and 141 to 218.

It belongs to the TBP family. In terms of tissue distribution, primary spermatocytes in the adult testis and in a subset of cells in the dorsal medial region of the embryonic CNS.

The protein localises to the nucleus. Functionally, acts as a transcription factor. Binds to the TATA box promoter element which lies close to the position of transcription initiation. In terms of biological role, may be essential for embryonic development. In Drosophila melanogaster (Fruit fly), this protein is TBP-related factor (Trf).